The primary structure comprises 99 residues: NADH-quinone oxidoreductase subunit K (99 aa).

3 helical membrane passes run 3 to 23 (LVNYLVLSGLLFTIGAATVLV), 28 to 48 (IIMFMGVELMLNASNLAFVAF), and 59 to 79 (VVAFFVMVVAAAEVVVGLAII).

It belongs to the complex I subunit 4L family. In terms of assembly, NDH-1 is composed of 14 different subunits. Subunits NuoA, H, J, K, L, M, N constitute the membrane sector of the complex.

It localises to the cell membrane. It catalyses the reaction a quinone + NADH + 5 H(+)(in) = a quinol + NAD(+) + 4 H(+)(out). NDH-1 shuttles electrons from NADH, via FMN and iron-sulfur (Fe-S) centers, to quinones in the respiratory chain. The immediate electron acceptor for the enzyme in this species is believed to be a menaquinone. Couples the redox reaction to proton translocation (for every two electrons transferred, four hydrogen ions are translocated across the cytoplasmic membrane), and thus conserves the redox energy in a proton gradient. The sequence is that of NADH-quinone oxidoreductase subunit K from Beutenbergia cavernae (strain ATCC BAA-8 / DSM 12333 / CCUG 43141 / JCM 11478 / NBRC 16432 / NCIMB 13614 / HKI 0122).